The primary structure comprises 281 residues: Undecaprenyl-diphosphatase (281 aa).

Transmembrane regions (helical) follow at residues 2 to 22 (FDLI…FLPV), 46 to 66 (AFSS…VIQL), 93 to 113 (VIVG…FMDA), 115 to 135 (LMNF…FIVI), 152 to 172 (ITFK…VPGT), 190 to 210 (FVAA…VTFL), 228 to 248 (IVML…IKFM), and 259 to 279 (VFGY…ILGI).

It belongs to the UppP family.

It localises to the cell membrane. The catalysed reaction is di-trans,octa-cis-undecaprenyl diphosphate + H2O = di-trans,octa-cis-undecaprenyl phosphate + phosphate + H(+). Functionally, catalyzes the dephosphorylation of undecaprenyl diphosphate (UPP). Confers resistance to bacitracin. In Leuconostoc mesenteroides subsp. mesenteroides (strain ATCC 8293 / DSM 20343 / BCRC 11652 / CCM 1803 / JCM 6124 / NCDO 523 / NBRC 100496 / NCIMB 8023 / NCTC 12954 / NRRL B-1118 / 37Y), this protein is Undecaprenyl-diphosphatase.